The following is a 321-amino-acid chain: MTQNTFFSLFPHQHLLGIKDLSVQDLTILLDRANANVPFLKKSDKKQSILHGRTQINLFFEASTRTQSSFELAGKRLGADVMSMAIGNSSVKKGETLVDTATTLNAMKPDILVIRHSCAGAAALLAQKVDCCVINAGDGAHEHPTQALLDALTIQRTKGRIEGLTVAICGDILHSRVARSNILSLNALGACVRVIAPSTLLPASIADMSVEVYNTMKEGLKGADVIMMLRLQQERMTGSFIPSIREYFHYFGLHKENLAYAKSDCIILHPGPINRGVEIASDIADGPQSMIHTQVEMGIAVRMAVMEALLDSRLKASGEKK.

Carbamoyl phosphate is bound by residues R65 and T66. K93 is an L-aspartate binding site. Carbamoyl phosphate is bound by residues R115, H143, and Q146. 2 residues coordinate L-aspartate: R176 and R230. Carbamoyl phosphate is bound by residues G271 and P272.

The protein belongs to the aspartate/ornithine carbamoyltransferase superfamily. ATCase family. In terms of assembly, heterododecamer (2C3:3R2) of six catalytic PyrB chains organized as two trimers (C3), and six regulatory PyrI chains organized as three dimers (R2).

It catalyses the reaction carbamoyl phosphate + L-aspartate = N-carbamoyl-L-aspartate + phosphate + H(+). It functions in the pathway pyrimidine metabolism; UMP biosynthesis via de novo pathway; (S)-dihydroorotate from bicarbonate: step 2/3. In terms of biological role, catalyzes the condensation of carbamoyl phosphate and aspartate to form carbamoyl aspartate and inorganic phosphate, the committed step in the de novo pyrimidine nucleotide biosynthesis pathway. This is Aspartate carbamoyltransferase catalytic subunit from Bartonella henselae (strain ATCC 49882 / DSM 28221 / CCUG 30454 / Houston 1) (Rochalimaea henselae).